We begin with the raw amino-acid sequence, 152 residues long: Protein-export protein SecB (152 aa).

This sequence belongs to the SecB family. Homotetramer, a dimer of dimers. One homotetramer interacts with 1 SecA dimer.

It localises to the cytoplasm. In terms of biological role, one of the proteins required for the normal export of preproteins out of the cell cytoplasm. It is a molecular chaperone that binds to a subset of precursor proteins, maintaining them in a translocation-competent state. It also specifically binds to its receptor SecA. The chain is Protein-export protein SecB from Rickettsia conorii (strain ATCC VR-613 / Malish 7).